A 417-amino-acid chain; its full sequence is 4-hydroxy-3-methylbut-2-en-1-yl diphosphate synthase (flavodoxin) (417 aa).

[4Fe-4S] cluster-binding residues include Cys305, Cys308, Cys351, and Glu358.

Belongs to the IspG family. Requires [4Fe-4S] cluster as cofactor.

It catalyses the reaction (2E)-4-hydroxy-3-methylbut-2-enyl diphosphate + oxidized [flavodoxin] + H2O + 2 H(+) = 2-C-methyl-D-erythritol 2,4-cyclic diphosphate + reduced [flavodoxin]. Its pathway is isoprenoid biosynthesis; isopentenyl diphosphate biosynthesis via DXP pathway; isopentenyl diphosphate from 1-deoxy-D-xylulose 5-phosphate: step 5/6. Functionally, converts 2C-methyl-D-erythritol 2,4-cyclodiphosphate (ME-2,4cPP) into 1-hydroxy-2-methyl-2-(E)-butenyl 4-diphosphate. This is 4-hydroxy-3-methylbut-2-en-1-yl diphosphate synthase (flavodoxin) from Nitrosomonas europaea (strain ATCC 19718 / CIP 103999 / KCTC 2705 / NBRC 14298).